The primary structure comprises 86 residues: MVVIRLARGGSKKRPFYNIVAAPARIRRDGRFLERVGFYNPVAAGGEEPLRVAFDRIDHWVSHGAQLSPTVARLVKDAKAKVAPAA.

This sequence belongs to the bacterial ribosomal protein bS16 family.

In Methylibium petroleiphilum (strain ATCC BAA-1232 / LMG 22953 / PM1), this protein is Small ribosomal subunit protein bS16.